The chain runs to 290 residues: MTVLLTGGTGRTAKHIAGIFRQTNVPFLVASRSSSAGTAENHRKFDWLDEETFPNALSVDQGMKPISVVWLCPPPLYDLATPVIKFIDFAVSQNVKKFVLLSASVIQKGGPAMGKIHEHLDSIKDVTYTVLRPTWFMENFSTKGEIQCEAIRRDSTVYSATENGKIPFISVVDIARVAACALTAETLKNSDHILQGPDLLTYDEVAQALTGVLGRKITHTKMTEGELAEKLMEEGVTPEEAYMHAAMDSMIKSGSEERVVSDEVKAWTGVKPRGFINFALSEKAAWRARK.

It belongs to the fgaFS/easG family. In terms of assembly, monomer.

It catalyses the reaction agroclavine + NADP(+) = didehydroagroclavine + NADPH + H(+). The protein operates within alkaloid biosynthesis; ergot alkaloid biosynthesis. Agroclavine dehydrogenase; part of the gene cluster that mediates the biosynthesis of fungal ergot alkaloid. DmaW catalyzes the first step of ergot alkaloid biosynthesis by condensing dimethylallyl diphosphate (DMAP) and tryptophan to form 4-dimethylallyl-L-tryptophan. The second step is catalyzed by the methyltransferase easF that methylates 4-dimethylallyl-L-tryptophan in the presence of S-adenosyl-L-methionine, resulting in the formation of 4-dimethylallyl-L-abrine. The catalase easC and the FAD-dependent oxidoreductase easE then transform 4-dimethylallyl-L-abrine to chanoclavine-I which is further oxidized by easD in the presence of NAD(+), resulting in the formation of chanoclavine-I aldehyde. Agroclavine dehydrogenase easG then mediates the conversion of chanoclavine-I aldehyde to agroclavine via a non-enzymatic adduct reaction: the substrate is an iminium intermediate that is formed spontaneously from chanoclavine-I aldehyde in the presence of glutathione. The presence of easA is not required to complete this reaction. Further conversion of agroclavine to paspalic acid is a two-step process involving oxidation of agroclavine to elymoclavine and of elymoclavine to paspalic acid, the second step being performed by the elymoclavine oxidase cloA. Paspalic acid is then further converted to D-lysergic acid. Ergopeptines are assembled from D-lysergic acid and three different amino acids by the D-lysergyl-peptide-synthetases composed each of a monomudular and a trimodular nonribosomal peptide synthetase subunit. LpsB and lpsC encode the monomodular subunits responsible for D-lysergic acid activation and incorporation into the ergopeptine backbone. LpsA1 and A2 subunits encode the trimodular nonribosomal peptide synthetase assembling the tripeptide portion of ergopeptines. LpsA1 is responsible for formation of the major ergopeptine, ergotamine, and lpsA2 for alpha-ergocryptine, the minor ergopeptine of the total alkaloid mixture elaborated by C.purpurea. D-lysergyl-tripeptides are assembled by the nonribosomal peptide synthetases and released as N-(D-lysergyl-aminoacyl)-lactams. Cyclolization of the D-lysergyl-tripeptides is performed by the Fe(2+)/2-ketoglutarate-dependent dioxygenase easH which introduces a hydroxyl group into N-(D-lysergyl-aminoacyl)-lactam at alpha-C of the aminoacyl residue followed by spontaneous condensation with the terminal lactam carbonyl group. The chain is Agroclavine dehydrogenase from Claviceps purpurea (strain 20.1) (Ergot fungus).